The sequence spans 86 residues: Replication regulatory protein repA2 (86 aa).

Over residues 1–14 (MSQTENAVTSSLSQ) the composition is skewed to polar residues. Positions 1–31 (MSQTENAVTSSLSQKRFVRRGKPMTDSEKQM) are disordered.

Its function is as follows. This protein is involved in the determination of copy number in gene replication. It binds to the repA promoter thus inhibiting the synthesis of the mRNA for the initiator protein RepA. The sequence is that of Replication regulatory protein repA2 (repA2) from Escherichia coli.